A 104-amino-acid polypeptide reads, in one-letter code: Large ribosomal subunit protein bL21 (104 aa).

This sequence belongs to the bacterial ribosomal protein bL21 family. As to quaternary structure, part of the 50S ribosomal subunit. Contacts protein L20.

Functionally, this protein binds to 23S rRNA in the presence of protein L20. The chain is Large ribosomal subunit protein bL21 from Leptospira borgpetersenii serovar Hardjo-bovis (strain JB197).